The primary structure comprises 672 residues: Bifunctional polymyxin resistance protein ArnA (672 aa).

The formyltransferase ArnAFT stretch occupies residues 1–310 (MKAIVFAYHD…EMGMVPQAKL (310 aa)). Residue His-104 is the Proton donor; for formyltransferase activity of the active site. Residues Arg-114 and 136-140 (VSRAD) each bind (6R)-10-formyltetrahydrofolate. Residues 320-672 (RRTRVLILGV…HADNVTDTQG (353 aa)) form a dehydrogenase ArnADH region. NAD(+) contacts are provided by residues Asp-353 and 374–375 (DI). Residues Ala-399, Tyr-404, and 438–439 (TS) each bind UDP-alpha-D-glucuronate. Catalysis depends on Glu-440, which acts as the Proton acceptor; for decarboxylase activity. UDP-alpha-D-glucuronate contacts are provided by residues Arg-466, Asn-498, 532 to 541 (KLVDGGAQKR), and Tyr-619. The active-site Proton donor; for decarboxylase activity is Arg-625.

In the N-terminal section; belongs to the Fmt family. UDP-L-Ara4N formyltransferase subfamily. It in the C-terminal section; belongs to the NAD(P)-dependent epimerase/dehydratase family. UDP-glucuronic acid decarboxylase subfamily. Homohexamer, formed by a dimer of trimers.

It carries out the reaction UDP-alpha-D-glucuronate + NAD(+) = UDP-beta-L-threo-pentopyranos-4-ulose + CO2 + NADH. It catalyses the reaction UDP-4-amino-4-deoxy-beta-L-arabinose + (6R)-10-formyltetrahydrofolate = UDP-4-deoxy-4-formamido-beta-L-arabinose + (6S)-5,6,7,8-tetrahydrofolate + H(+). It functions in the pathway nucleotide-sugar biosynthesis; UDP-4-deoxy-4-formamido-beta-L-arabinose biosynthesis; UDP-4-deoxy-4-formamido-beta-L-arabinose from UDP-alpha-D-glucuronate: step 1/3. Its pathway is nucleotide-sugar biosynthesis; UDP-4-deoxy-4-formamido-beta-L-arabinose biosynthesis; UDP-4-deoxy-4-formamido-beta-L-arabinose from UDP-alpha-D-glucuronate: step 3/3. It participates in bacterial outer membrane biogenesis; lipopolysaccharide biosynthesis. Bifunctional enzyme that catalyzes the oxidative decarboxylation of UDP-glucuronic acid (UDP-GlcUA) to UDP-4-keto-arabinose (UDP-Ara4O) and the addition of a formyl group to UDP-4-amino-4-deoxy-L-arabinose (UDP-L-Ara4N) to form UDP-L-4-formamido-arabinose (UDP-L-Ara4FN). The modified arabinose is attached to lipid A and is required for resistance to polymyxin and cationic antimicrobial peptides. This is Bifunctional polymyxin resistance protein ArnA from Pectobacterium carotovorum subsp. carotovorum (strain PC1).